Here is a 1263-residue protein sequence, read N- to C-terminus: TBC1 domain family member 9B (1263 aa).

GRAM domains follow at residues 142–209 and 288–356; these read LKMR…EKNA and ECYR…EKAD. The residue at position 397 (threonine 397) is a Phosphothreonine. Residues 397–449 are disordered; sequence TPSKQTGSSIGGTKASVSDPAPESLPTPQEASEPPASPSSPLSSPPSFSTQEI. Phosphoserine is present on residues serine 412, serine 433, serine 436, and serine 464. The span at 422–447 shows a compositional bias: low complexity; sequence PTPQEASEPPASPSSPLSSPPSFSTQ. Residues 509 to 696 form the Rab-GAP TBC domain; it reads GIPESLRGEL…VIVDCFFYEG (188 aa). The helical transmembrane segment at 669-689 threads the bilayer; sequence LSWFLTLFLSVMPFESAVVIV. An EF-hand domain is found at 880-915; the sequence is HTPVLAGRMFRLLDQNKDSLINFKEFVTGMSGMYHG. Disordered regions lie at residues 977 to 1002, 1075 to 1126, and 1139 to 1159; these read EQQEGSGNEDTPERREEKGTSPPDYR, TTKK…SGDM, and VEGGSGEGQGSPSLLLSDDET. Positions 987–1002 are enriched in basic and acidic residues; sequence TPERREEKGTSPPDYR. Serine 1254 is modified (phosphoserine).

The protein localises to the membrane. In terms of biological role, may act as a GTPase-activating protein for Rab family protein(s). The chain is TBC1 domain family member 9B (Tbc1d9b) from Mus musculus (Mouse).